The chain runs to 341 residues: Methionine import ATP-binding protein MetN 1 (341 aa).

In terms of domain architecture, ABC transporter spans 2-241 (IEFRQVSKTF…PKTTIAQNFV (240 aa)). 38-45 (GYSGAGKS) provides a ligand contact to ATP.

It belongs to the ABC transporter superfamily. Methionine importer (TC 3.A.1.24) family. In terms of assembly, the complex is composed of two ATP-binding proteins (MetN), two transmembrane proteins (MetI) and a solute-binding protein (MetQ).

It localises to the cell membrane. The enzyme catalyses L-methionine(out) + ATP + H2O = L-methionine(in) + ADP + phosphate + H(+). It catalyses the reaction D-methionine(out) + ATP + H2O = D-methionine(in) + ADP + phosphate + H(+). Functionally, part of the ABC transporter complex MetNIQ involved in methionine import. Responsible for energy coupling to the transport system. This is Methionine import ATP-binding protein MetN 1 from Staphylococcus aureus (strain USA300).